The chain runs to 117 residues: Large ribosomal subunit protein bL20 (117 aa).

It belongs to the bacterial ribosomal protein bL20 family.

In terms of biological role, binds directly to 23S ribosomal RNA and is necessary for the in vitro assembly process of the 50S ribosomal subunit. It is not involved in the protein synthesizing functions of that subunit. In Geotalea daltonii (strain DSM 22248 / JCM 15807 / FRC-32) (Geobacter daltonii), this protein is Large ribosomal subunit protein bL20.